The sequence spans 336 residues: 3-isopropylmalate dehydrogenase (336 aa).

4 residues coordinate substrate: Arg87, Arg97, Arg121, and Asp211. Residues Asp211, Asp235, and Asp239 each contribute to the Mg(2+) site. 271-283 (GSAPDIAGQGIAD) provides a ligand contact to NAD(+).

This sequence belongs to the isocitrate and isopropylmalate dehydrogenases family. LeuB type 2 subfamily. In terms of assembly, homodimer. Mg(2+) is required as a cofactor. Mn(2+) serves as cofactor.

The protein resides in the cytoplasm. It carries out the reaction (2R,3S)-3-isopropylmalate + NAD(+) = 4-methyl-2-oxopentanoate + CO2 + NADH. The protein operates within amino-acid biosynthesis; L-leucine biosynthesis; L-leucine from 3-methyl-2-oxobutanoate: step 3/4. In terms of biological role, catalyzes the oxidation of 3-carboxy-2-hydroxy-4-methylpentanoate (3-isopropylmalate) to 3-carboxy-4-methyl-2-oxopentanoate. The product decarboxylates to 4-methyl-2 oxopentanoate. The protein is 3-isopropylmalate dehydrogenase of Rhodococcus opacus (strain B4).